The primary structure comprises 304 residues: Killer cell immunoglobulin-like receptor 2DS5 (304 aa).

The N-terminal stretch at 1 to 21 is a signal peptide; sequence MSLMVISMACVAFFLLQGAWP. Residues 22 to 245 lie on the Extracellular side of the membrane; that stretch reads HEGFRRKPSL…SETGNPRHLH (224 aa). 2 consecutive Ig-like C2-type domains span residues 42–107 and 142–205; these read EETV…VTHS and GESV…FRDS. 2 disulfide bridges follow: Cys49–Cys100 and Cys149–Cys198. 4 N-linked (GlcNAc...) asparagine glycosylation sites follow: Asn67, Asn84, Asn178, and Asn223. A helical transmembrane segment spans residues 246 to 264; the sequence is VLIGTSVVKLPFTILLFFL. The Cytoplasmic portion of the chain corresponds to 265 to 304; that stretch reads LHRWCSNKKNASVMDQGPAGNRTVNREDSDEQDHQEVSYA. Positions 275–304 are disordered; it reads ASVMDQGPAGNRTVNREDSDEQDHQEVSYA. Residues 288-304 show a composition bias toward basic and acidic residues; that stretch reads VNREDSDEQDHQEVSYA.

This sequence belongs to the immunoglobulin superfamily. As to quaternary structure, interacts with TYROBP. N-glycosylated, glycosylation varies depending on the allele which alters cell surface expression levels. As to expression, expressed on a discrete subset of peripheral blood NK cells.

It localises to the cell membrane. Functionally, activating natural killer (NK) receptor that recognizes C2 epitopes of HLA-C alleles. Bridging the innate and adaptive immune systems, NK cells express a number of cell surface receptors which either inhibit or stimulate their cytotoxicity. Able to activate NK cells citotoxicity and cytokine production such as IFNG. Receptor functions are attenuated even lost in some alleles, such as KIR2DS5*002 represented in this entry. The chain is Killer cell immunoglobulin-like receptor 2DS5 from Homo sapiens (Human).